The following is a 143-amino-acid chain: MFFGTFTPKLDDKGRLTLPAKFREELKDGLMVVKGQDHSLAIYPREEFLLRARKAAAASRSNPQARAFVRNLAASADEQDLDSQGRISVSAAHREYAGLKKECVVIGSVDFLEIWDAQAWEEYSAAHEADFAAGDDEAFANFL.

2 consecutive SpoVT-AbrB domains span residues 5 to 47 and 76 to 119; these read TFTP…PREE and ADEQ…DAQA.

Belongs to the MraZ family. In terms of assembly, forms oligomers.

The protein localises to the cytoplasm. Its subcellular location is the nucleoid. This chain is Transcriptional regulator MraZ, found in Corynebacterium urealyticum (strain ATCC 43042 / DSM 7109).